The following is a 475-amino-acid chain: Protein transport protein Sec61 subunit alpha (475 aa).

Helical transmembrane passes span 33 to 53, 76 to 96, 118 to 138, 145 to 165, 173 to 193, 241 to 261, 289 to 309, 354 to 374, 420 to 440, and 441 to 461; these read LWTA…LFGI, LMEL…LLAG, LFGM…GMYG, AGIC…VLLL, YGLG…TIVW, NLMN…FQGF, IPII…QMLA, FLDP…CAFF, AAFG…IGAI, and GSGT…EIFV.

Belongs to the SecY/SEC61-alpha family. In terms of assembly, the SEC61 channel-forming translocon complex consists of channel-forming core components SEC61A1, SEC61B and SEC61G and different auxiliary components such as SEC62 and SEC63. The SEC61 channel associates with the multi-pass translocon (MPT) complex. Expressed predominantly in epidermal cells of the embryo.

The protein resides in the endoplasmic reticulum membrane. Functionally, component of SEC61 channel-forming translocon complex that mediates transport of signal peptide-containing precursor polypeptides across the endoplasmic reticulum (ER). Forms a ribosome receptor and a gated pore in the ER membrane, both functions required for cotranslational translocation of nascent polypeptides. May cooperate with auxiliary protein SEC62, SEC63 and HSPA5/BiP to enable post-translational transport of small presecretory proteins. The SEC61 channel is also involved in ER membrane insertion of transmembrane proteins: it mediates membrane insertion of the first few transmembrane segments of proteins, while insertion of subsequent transmembrane regions of multi-pass membrane proteins is mediated by the multi-pass translocon (MPT) complex. The protein is Protein transport protein Sec61 subunit alpha of Halocynthia roretzi (Sea squirt).